Reading from the N-terminus, the 345-residue chain is Holliday junction branch migration complex subunit RuvB (345 aa).

Positions 3–187 (LDILQNRNNL…FGFTARLDFY (185 aa)) are large ATPase domain (RuvB-L). ATP is bound by residues Leu26, Arg27, Gly68, Lys71, Thr72, Thr73, 134–136 (EDF), Arg177, Tyr187, and Arg224. A Mg(2+)-binding site is contributed by Thr72. The tract at residues 188 to 259 (SPEELLQVLI…IALKAMDVYE (72 aa)) is small ATPAse domain (RuvB-S). The segment at 262–345 (SLGLDRLDRA…EDLSGFELYL (84 aa)) is head domain (RuvB-H). DNA contacts are provided by Arg317 and Arg322.

Belongs to the RuvB family. In terms of assembly, homohexamer. Forms an RuvA(8)-RuvB(12)-Holliday junction (HJ) complex. HJ DNA is sandwiched between 2 RuvA tetramers; dsDNA enters through RuvA and exits via RuvB. An RuvB hexamer assembles on each DNA strand where it exits the tetramer. Each RuvB hexamer is contacted by two RuvA subunits (via domain III) on 2 adjacent RuvB subunits; this complex drives branch migration. In the full resolvosome a probable DNA-RuvA(4)-RuvB(12)-RuvC(2) complex forms which resolves the HJ.

Its subcellular location is the cytoplasm. The catalysed reaction is ATP + H2O = ADP + phosphate + H(+). In terms of biological role, the RuvA-RuvB-RuvC complex processes Holliday junction (HJ) DNA during genetic recombination and DNA repair, while the RuvA-RuvB complex plays an important role in the rescue of blocked DNA replication forks via replication fork reversal (RFR). RuvA specifically binds to HJ cruciform DNA, conferring on it an open structure. The RuvB hexamer acts as an ATP-dependent pump, pulling dsDNA into and through the RuvAB complex. RuvB forms 2 homohexamers on either side of HJ DNA bound by 1 or 2 RuvA tetramers; 4 subunits per hexamer contact DNA at a time. Coordinated motions by a converter formed by DNA-disengaged RuvB subunits stimulates ATP hydrolysis and nucleotide exchange. Immobilization of the converter enables RuvB to convert the ATP-contained energy into a lever motion, pulling 2 nucleotides of DNA out of the RuvA tetramer per ATP hydrolyzed, thus driving DNA branch migration. The RuvB motors rotate together with the DNA substrate, which together with the progressing nucleotide cycle form the mechanistic basis for DNA recombination by continuous HJ branch migration. Branch migration allows RuvC to scan DNA until it finds its consensus sequence, where it cleaves and resolves cruciform DNA. In Tropheryma whipplei (strain TW08/27) (Whipple's bacillus), this protein is Holliday junction branch migration complex subunit RuvB.